The following is a 609-amino-acid chain: Chaperone protein DnaK (609 aa).

Threonine 173 carries the phosphothreonine; by autocatalysis modification. The segment at 580–609 (QAAQGGGAEGQEPKKDNVVDADYEVVDDKK) is disordered. The span at 598–609 (VDADYEVVDDKK) shows a compositional bias: acidic residues.

The protein belongs to the heat shock protein 70 family.

In terms of biological role, acts as a chaperone. In Brevibacillus brevis (strain 47 / JCM 6285 / NBRC 100599), this protein is Chaperone protein DnaK.